The sequence spans 354 residues: Uroporphyrinogen decarboxylase (354 aa).

Substrate contacts are provided by residues 28-32, D78, Y155, S210, and H325; that span reads RQAGR.

It belongs to the uroporphyrinogen decarboxylase family. Homodimer.

It is found in the cytoplasm. It carries out the reaction uroporphyrinogen III + 4 H(+) = coproporphyrinogen III + 4 CO2. It participates in porphyrin-containing compound metabolism; protoporphyrin-IX biosynthesis; coproporphyrinogen-III from 5-aminolevulinate: step 4/4. In terms of biological role, catalyzes the decarboxylation of four acetate groups of uroporphyrinogen-III to yield coproporphyrinogen-III. The polypeptide is Uroporphyrinogen decarboxylase (Crocosphaera subtropica (strain ATCC 51142 / BH68) (Cyanothece sp. (strain ATCC 51142))).